The sequence spans 264 residues: Small ribosomal subunit protein eS1 (264 aa).

Lys-34 carries the post-translational modification N6-acetyllysine; alternate. Residue Lys-34 forms a Glycyl lysine isopeptide (Lys-Gly) (interchain with G-Cter in SUMO2); alternate linkage. Lys-56 is subject to N6-acetyllysine. Tyr-155 is subject to ADP-ribosyltyrosine. Residues 232–264 (HGEGSSSGKATGDETGAKVERADGYEPPVQESV) are disordered. Phosphoserine is present on residues Ser-236 and Ser-237. Over residues 242–255 (TGDETGAKVERADG) the composition is skewed to basic and acidic residues. Position 249 is an N6-acetyllysine; alternate (Lys-249). A Glycyl lysine isopeptide (Lys-Gly) (interchain with G-Cter in SUMO2); alternate cross-link involves residue Lys-249. Tyr-256 is subject to Phosphotyrosine. Phosphoserine is present on Ser-263.

It belongs to the eukaryotic ribosomal protein eS1 family. In terms of assembly, component of the small ribosomal subunit. Mature ribosomes consist of a small (40S) and a large (60S) subunit. The 40S subunit contains about 33 different proteins and 1 molecule of RNA (18S). The 60S subunit contains about 49 different proteins and 3 molecules of RNA (28S, 5.8S and 5S). Identified in a IGF2BP1-dependent mRNP granule complex containing untranslated mRNAs. Binds with high affinity to IPO4. Interacts with DDIT3. Part of the small subunit (SSU) processome, composed of more than 70 proteins and the RNA chaperone small nucleolar RNA (snoRNA) U3. ADP-ribosylated at Tyr-155 by PARP1 in presence of HPF1.

The protein resides in the cytoplasm. It is found in the nucleus. The protein localises to the nucleolus. Component of the small ribosomal subunit. The ribosome is a large ribonucleoprotein complex responsible for the synthesis of proteins in the cell. Part of the small subunit (SSU) processome, first precursor of the small eukaryotic ribosomal subunit. During the assembly of the SSU processome in the nucleolus, many ribosome biogenesis factors, an RNA chaperone and ribosomal proteins associate with the nascent pre-rRNA and work in concert to generate RNA folding, modifications, rearrangements and cleavage as well as targeted degradation of pre-ribosomal RNA by the RNA exosome. May play a role during erythropoiesis through regulation of transcription factor DDIT3. The sequence is that of Small ribosomal subunit protein eS1 from Bos taurus (Bovine).